The primary structure comprises 2376 residues: Serine/threonine-protein kinase WNK1 (2376 aa).

Disordered stretches follow at residues 1 to 78 (MSGG…EHRF) and 93 to 201 (ELPG…QQDD). Low complexity-rich tracts occupy residues 10 to 19 (SSPPGSLFLS) and 40 to 49 (GAAAADAGAG). Residues Ser-15 and Ser-19 each carry the phosphoserine modification. The segment covering 50–66 (RTEEYRRRRHTMDKDSR) has biased composition (basic and acidic residues). Thr-60 is modified (phosphothreonine). Over residues 125–158 (TPAVAHVAQQPPAAATPGEPAAAVPAAASAPGSA) the composition is skewed to low complexity. Ser-172 carries the post-translational modification Phosphoserine. Positions 219–477 (LKFDIEIGRG…IKDLLNHAFF (259 aa)) constitute a Protein kinase domain. Ser-229 serves as a coordination point for ATP. Positions 281 and 297 each coordinate chloride. ATP-binding positions include 299-302 (TELM) and Lys-349. Asp-366 functions as the Proton acceptor in the catalytic mechanism. 2 residues coordinate chloride: Leu-367 and Leu-369. Residues Ser-376 and Ser-380 each carry the phosphoserine; by autocatalysis modification. Positions 486–553 (ELAEEDDGEK…VCEGDHKTMA (68 aa)) are autoinhibitory domain. Basic and acidic residues predominate over residues 571 to 586 (QLVREEQEKRKQEESS). Disordered stretches follow at residues 571-641 (QLVR…QLQY), 701-799 (AQPH…PVPT), and 1026-1118 (TTSS…SRPK). Low complexity-rich tracts occupy residues 587 to 601 (LKQQ…SQAG) and 614 to 624 (AAATTSASVST). The interaction with KLHL3 stretch occupies residues 627–637 (EPEEPEADQHQ). Positions 708-752 (PPSSMAQGQSQGQPSSSSLTGIPSSQPVQHSQQQQGVQQTAPSQQ) are enriched in low complexity. Residues 753–766 (TVQYSLPQTSAPSE) are compositionally biased toward polar residues. A compositionally biased stretch (pro residues) spans 1045-1057 (PPEPVPAAPPQPT). Polar residues predominate over residues 1079-1089 (SDGNENVPSSS). The segment covering 1097–1118 (IKRHYRKSVRSRSRHEKTSRPK) has biased composition (basic residues). Positions 1257 to 1260 (RFIV) match the RFXV motif 1 motif. Ser-1261 bears the Phosphoserine mark. Disordered stretches follow at residues 1459-1478 (STAA…VSGS) and 1734-1770 (STIP…PPSE). Positions 1746-1756 (SKPPSTKPPVL) are enriched in pro residues. Residues 1853–1856 (RFQV) carry the RFXV motif 2 motif. Residues 1862-1878 (DTQKEGKNKSEDVKSVH) are compositionally biased toward basic and acidic residues. The disordered stretch occupies residues 1862–1942 (DTQKEGKNKS…QPTKVGRFQV (81 aa)). Residues 1881-1899 (SSTSESSVLSSSSPESTLV) are compositionally biased toward low complexity. 2 short sequence motifs (RFXV motif) span residues 1939 to 1942 (RFQV) and 1951 to 1954 (RFSV). Phosphoserine occurs at positions 1972, 1996, 2005, 2006, 2021, 2023, and 2026. Disordered stretches follow at residues 1991–2033 (EKPE…LCSK) and 2110–2239 (AAAP…RKGT). The segment covering 2116-2128 (GRRRRPTKSKGSK) has biased composition (basic residues). Over residues 2129-2141 (SSRSSSLGNKSPG) the composition is skewed to low complexity. Composition is skewed to polar residues over residues 2146 to 2161 (LSGQ…QQTL) and 2169 to 2193 (ETGQ…SAFT). Over residues 2207–2223 (GQGTSSTNTVGGTVSSQ) the composition is skewed to low complexity. A compositionally biased stretch (polar residues) spans 2224-2238 (AAQAQPPTMTSSRKG). The tract at residues 2235–2255 (SRKGTFTDDLHKLVDNWARDA) is amphipathic alpha-helix. A phosphoserine mark is found at Ser-2264, Ser-2280, Ser-2364, and Ser-2366.

The protein belongs to the protein kinase superfamily. Ser/Thr protein kinase family. WNK subfamily. As to quaternary structure, interacts with WNK3. Interacts with WNK4; inhibiting the activity of WNK4. Interacts with SGK1; promoting its activation. Associates with the mTORC2 complex. Interacts with UVRAG. Interacts (via amphipathic alpha-helix region) with EMC2; promoting the ER membrane protein complex assembly. Mg(2+) is required as a cofactor. Post-translationally, autophosphorylated at Ser-376 and Ser-380, promoting its activity. Autophosphorylation at Ser-380 is inhibited by intracellular calcium. Phosphorylation at Thr-60 increases ability to activate SGK1. In terms of processing, ubiquitinated by the BCR(KLHL3) complex, leading to its degradation. Also ubiquitinated by the BCR(KLHL2) complex.

Its subcellular location is the cytoplasm. It localises to the nucleus. It is found in the cytoskeleton. The protein resides in the spindle. It carries out the reaction L-seryl-[protein] + ATP = O-phospho-L-seryl-[protein] + ADP + H(+). The catalysed reaction is L-threonyl-[protein] + ATP = O-phospho-L-threonyl-[protein] + ADP + H(+). With respect to regulation, activated in response to hyperosmotic stress: cell shrinkage promotes formation of a membraneless compartment that concentrates WNK1 with its substrates, OXSR1/OSR1 and STK39/SPAK. Activation requires autophosphorylation of Ser-380 and, to a lower extent, Ser-376. Autophosphorylation and subsequent activation is inhibited by increases in intracellular ionic strength: Cl(-) potently inhibits WNK1 kinase activity via direct binding. Also inhibited by K(+) ions. In terms of biological role, serine/threonine-protein kinase component of the WNK1-SPAK/OSR1 kinase cascade, which acts as a key regulator of blood pressure and regulatory volume increase by promoting ion influx. WNK1 mediates regulatory volume increase in response to hyperosmotic stress by acting as a molecular crowding sensor, which senses cell shrinkage and mediates formation of a membraneless compartment by undergoing liquid-liquid phase separation. The membraneless compartment concentrates WNK1 with its substrates, OXSR1/OSR1 and STK39/SPAK, promoting WNK1-dependent phosphorylation and activation of downstream kinases OXSR1/OSR1 and STK39/SPAK. Following activation, OXSR1/OSR1 and STK39/SPAK catalyze phosphorylation of ion cotransporters SLC12A1/NKCC2, SLC12A2/NKCC1, SLC12A5/KCC2 and SLC12A6/KCC3, regulating their activity. Phosphorylation of Na-K-Cl cotransporters SLC12A2/NKCC1 and SLC12A2/NKCC1 promote their activation and ion influx; simultaneously, phosphorylation of K-Cl cotransporters SLC12A5/KCC2 and SLC12A6/KCC3 inhibit their activity, blocking ion efflux. Also acts as a regulator of angiogenesis in endothelial cells via activation of OXSR1/OSR1 and STK39/SPAK: activation of OXSR1/OSR1 regulates chemotaxis and invasion, while STK39/SPAK regulates endothelial cell proliferation. Also acts independently of the WNK1-SPAK/OSR1 kinase cascade by catalyzing phosphorylation of other substrates, such as SYT2, PCF11 and NEDD4L. Mediates phosphorylation of SYT2, regulating SYT2 association with phospholipids and membrane-binding. Regulates mRNA export in the nucleus by mediating phosphorylation of PCF11, thereby decreasing the association between PCF11 and POLR2A/RNA polymerase II and promoting mRNA export to the cytoplasm. Acts as a negative regulator of autophagy. Required for the abscission step during mitosis, independently of the WNK1-SPAK/OSR1 kinase cascade. May also play a role in actin cytoskeletal reorganization. Also acts as a scaffold protein independently of its protein kinase activity: negatively regulates cell membrane localization of various transporters and channels, such as SLC4A4, SLC26A6, SLC26A9, TRPV4 and CFTR. Involved in the regulation of epithelial Na(+) channel (ENaC) by promoting activation of SGK1 in a kinase-independent manner: probably acts as a scaffold protein that promotes the recruitment of SGK1 to the mTORC2 complex in response to chloride, leading to mTORC2-dependent phosphorylation and activation of SGK1. Acts as an assembly factor for the ER membrane protein complex independently of its protein kinase activity: associates with EMC2 in the cytoplasm via its amphipathic alpha-helix, and prevents EMC2 ubiquitination and subsequent degradation, thereby promoting EMC2 stabilization. This Sus scrofa (Pig) protein is Serine/threonine-protein kinase WNK1.